A 200-amino-acid polypeptide reads, in one-letter code: NADH-quinone oxidoreductase subunit B (200 aa).

Cys78, Cys79, Cys144, and Cys174 together coordinate [4Fe-4S] cluster.

It belongs to the complex I 20 kDa subunit family. As to quaternary structure, NDH-1 is composed of 14 different subunits. Subunits NuoB, C, D, E, F, and G constitute the peripheral sector of the complex. Requires [4Fe-4S] cluster as cofactor.

The protein localises to the cell membrane. The catalysed reaction is a quinone + NADH + 5 H(+)(in) = a quinol + NAD(+) + 4 H(+)(out). Its function is as follows. NDH-1 shuttles electrons from NADH, via FMN and iron-sulfur (Fe-S) centers, to quinones in the respiratory chain. The immediate electron acceptor for the enzyme in this species is believed to be ubiquinone. Couples the redox reaction to proton translocation (for every two electrons transferred, four hydrogen ions are translocated across the cytoplasmic membrane), and thus conserves the redox energy in a proton gradient. The chain is NADH-quinone oxidoreductase subunit B from Dehalococcoides mccartyi (strain ATCC BAA-2100 / JCM 16839 / KCTC 5957 / BAV1).